Here is a 429-residue protein sequence, read N- to C-terminus: Zinc metalloproteinase nas-17 (429 aa).

Residues Met-1–Ala-21 form the signal peptide. Asn-54 carries an N-linked (GlcNAc...) asparagine glycan. One can recognise a Peptidase M12A domain in the interval Arg-62 to Gly-251. 4 disulfides stabilise this stretch: Cys-104/Cys-250, Cys-125/Cys-144, Cys-252/Cys-272, and Cys-274/Cys-283. His-152 contacts Zn(2+). The active site involves Glu-153. Zn(2+) is bound by residues His-156 and His-162. The EGF-like domain occupies Asn-245–Asn-284.

Zn(2+) serves as cofactor.

The protein localises to the secreted. Functionally, metalloprotease. The sequence is that of Zinc metalloproteinase nas-17 (nas-17) from Caenorhabditis elegans.